The primary structure comprises 521 residues: Medium/long-chain-fatty-acid--[acyl-carrier-protein] ligase MbtM (521 aa).

The protein belongs to the ATP-dependent AMP-binding enzyme family.

It carries out the reaction a long-chain fatty acid + holo-[ACP] + ATP = a long-chain fatty acyl-[ACP] + AMP + diphosphate. The catalysed reaction is a medium-chain fatty acid + holo-[ACP] + ATP = a medium-chain fatty acyl-[ACP] + AMP + diphosphate. It participates in siderophore biosynthesis; mycobactin biosynthesis. Its function is as follows. Activates lipidic moieties required for mycobactin biosynthesis. Converts medium- to long-chain aliphatic fatty acids into acyl adenylate, which is further transferred on to the phosphopantetheine arm of the carrier protein MbtL. This is Medium/long-chain-fatty-acid--[acyl-carrier-protein] ligase MbtM (mbtM) from Mycobacterium tuberculosis (strain CDC 1551 / Oshkosh).